The primary structure comprises 269 residues: Formamidopyrimidine-DNA glycosylase (269 aa).

Pro2 (schiff-base intermediate with DNA) is an active-site residue. Glu3 acts as the Proton donor in catalysis. Lys57 acts as the Proton donor; for beta-elimination activity in catalysis. DNA contacts are provided by His90, Arg109, and Lys150. The FPG-type zinc-finger motif lies at 235–269; sequence QVYGRKGEPCRVCGTPIAATKHAQRATFYCRHCQK. Arg259 (proton donor; for delta-elimination activity) is an active-site residue.

The protein belongs to the FPG family. Monomer. Zn(2+) is required as a cofactor.

It catalyses the reaction Hydrolysis of DNA containing ring-opened 7-methylguanine residues, releasing 2,6-diamino-4-hydroxy-5-(N-methyl)formamidopyrimidine.. The catalysed reaction is 2'-deoxyribonucleotide-(2'-deoxyribose 5'-phosphate)-2'-deoxyribonucleotide-DNA = a 3'-end 2'-deoxyribonucleotide-(2,3-dehydro-2,3-deoxyribose 5'-phosphate)-DNA + a 5'-end 5'-phospho-2'-deoxyribonucleoside-DNA + H(+). Its function is as follows. Involved in base excision repair of DNA damaged by oxidation or by mutagenic agents. Acts as a DNA glycosylase that recognizes and removes damaged bases. Has a preference for oxidized purines, such as 7,8-dihydro-8-oxoguanine (8-oxoG). Has AP (apurinic/apyrimidinic) lyase activity and introduces nicks in the DNA strand. Cleaves the DNA backbone by beta-delta elimination to generate a single-strand break at the site of the removed base with both 3'- and 5'-phosphates. This Salmonella paratyphi B (strain ATCC BAA-1250 / SPB7) protein is Formamidopyrimidine-DNA glycosylase.